A 398-amino-acid chain; its full sequence is O-methyltransferase mpaG (398 aa).

Aspartate 264 lines the S-adenosyl-L-methionine pocket. The active-site Proton acceptor is the histidine 306. Residues glutamate 335 and glutamate 362 contribute to the active site.

This sequence belongs to the class I-like SAM-binding methyltransferase superfamily. Cation-independent O-methyltransferase family. COMT subfamily.

Its subcellular location is the cytoplasm. The protein localises to the cytosol. The enzyme catalyses (4E,8E)-10-(4,6-dihydroxy-7-methyl-3-oxo-1,3-dihydro-2-benzofuran-5-yl)-4,8-dimethyldeca-4,8-dienoate + S-adenosyl-L-methionine = (4E,8E)-10-(4-hydroxy-6-methoxy-7-methyl-3-oxo-1,3-dihydro-2-benzofuran-5-yl)-4,8-dimethyldeca-4,8-dienoate + S-adenosyl-L-homocysteine + H(+). Its pathway is secondary metabolite biosynthesis; terpenoid biosynthesis. In terms of biological role, O-methyltransferase; part of the gene cluster that mediates the biosynthesis of mycophenolic acid (MPA), the first isolated antibiotic natural product in the world obtained from a culture of Penicillium brevicompactum in 1893. MpaC methylates farnesyl-DHMP-3C (FDHMP-3C) to yield MFDHMP-3C. The first step of the pathway is the synthesis of 5-methylorsellinic acid (5MOA) by the cytosolic polyketide synthase mpaC. 5MOA is then converted to the phthalide compound 5,7-dihydroxy-4,6-dimethylphthalide (DHMP) by the endoplasmic reticulum-bound cytochrome P450 monooxygenase mpaDE. MpaDE first catalyzes hydroxylation of 5-MOA to 4,6-dihydroxy-2-(hydroxymethyl)-3-methylbenzoic acid (DHMB). MpaDE then acts as a lactone synthase that catalyzes the ring closure to convert DHMB into DHMP. The next step is the prenylation of DHMP by the Golgi apparatus-associated prenyltransferase mpaA to yield farnesyl-DHMP (FDHMP). The ER-bound oxygenase mpaB then mediates the oxidative cleavage the C19-C20 double bond in FDHMP to yield FDHMP-3C via a mycophenolic aldehyde intermediate. The O-methyltransferase mpaG catalyzes the methylation of FDHMP-3C to yield MFDHMP-3C. After the cytosolic methylation of FDHMP-3C, MFDHMP-3C enters into peroxisomes probably via free diffusion due to its low molecular weight. Upon a peroxisomal CoA ligation reaction, catalyzed by a beta-oxidation component enzyme acyl-CoA ligase ACL891, MFDHMP-3C-CoA would then be restricted to peroxisomes for the following beta-oxidation pathway steps. The peroxisomal beta-oxidation machinery than converts MFDHMP-3C-CoA into MPA_CoA, via a beta-oxidation chain-shortening process. Finally mpaH acts as a peroxisomal acyl-CoA hydrolase with high substrate specificity toward MPA-CoA to release the final product MPA. The sequence is that of O-methyltransferase mpaG from Penicillium roqueforti (strain FM164).